A 23-amino-acid polypeptide reads, in one-letter code: Malate dehydrogenase (23 aa).

Asn7 serves as a coordination point for NAD(+). Residue Arg23 participates in substrate binding.

This sequence belongs to the LDH/MDH superfamily. MDH type 1 family. In terms of assembly, homodimer.

The catalysed reaction is (S)-malate + NAD(+) = oxaloacetate + NADH + H(+). The sequence is that of Malate dehydrogenase from Pseudotsuga menziesii (Douglas-fir).